Here is a 129-residue protein sequence, read N- to C-terminus: Small ribosomal subunit protein uS11 (129 aa).

It belongs to the universal ribosomal protein uS11 family. As to quaternary structure, part of the 30S ribosomal subunit. Interacts with proteins S7 and S18. Binds to IF-3.

In terms of biological role, located on the platform of the 30S subunit, it bridges several disparate RNA helices of the 16S rRNA. Forms part of the Shine-Dalgarno cleft in the 70S ribosome. The chain is Small ribosomal subunit protein uS11 from Yersinia enterocolitica serotype O:8 / biotype 1B (strain NCTC 13174 / 8081).